The sequence spans 245 residues: tRNA (guanine-N(1)-)-methyltransferase (245 aa).

Gly114 serves as a coordination point for S-adenosyl-L-methionine.

It belongs to the RNA methyltransferase TrmD family. As to quaternary structure, homodimer.

It localises to the cytoplasm. It carries out the reaction guanosine(37) in tRNA + S-adenosyl-L-methionine = N(1)-methylguanosine(37) in tRNA + S-adenosyl-L-homocysteine + H(+). Functionally, specifically methylates guanosine-37 in various tRNAs. The protein is tRNA (guanine-N(1)-)-methyltransferase of Sphingopyxis alaskensis (strain DSM 13593 / LMG 18877 / RB2256) (Sphingomonas alaskensis).